The following is a 92-amino-acid chain: Co-chaperonin GroES (92 aa).

The protein belongs to the GroES chaperonin family. As to quaternary structure, heptamer of 7 subunits arranged in a ring. Interacts with the chaperonin GroEL.

The protein localises to the cytoplasm. In terms of biological role, together with the chaperonin GroEL, plays an essential role in assisting protein folding. The GroEL-GroES system forms a nano-cage that allows encapsulation of the non-native substrate proteins and provides a physical environment optimized to promote and accelerate protein folding. GroES binds to the apical surface of the GroEL ring, thereby capping the opening of the GroEL channel. The chain is Co-chaperonin GroES from Methanosarcina barkeri (strain Fusaro / DSM 804).